A 39-amino-acid chain; its full sequence is Natriuretic peptide TNPc (39 aa).

The cysteines at positions 9 and 25 are disulfide-linked.

This sequence belongs to the natriuretic peptide family. Expressed by the venom gland.

The protein localises to the secreted. Its function is as follows. Snake venom natriuretic peptide that exhibits vasoactive and hypotensive activity. Produces a near complete relaxation in pre-contracted aortae by activating the natriuretic peptide receptor 1 (NPR1). Stimulates cGMP production through the natriuretic peptide receptor 1 (NPR1) with high potencies for the rat NPR1 (EC(50)=100 nM), and very weak potencies over human NPR1 (28% activation at 10 uM). In vivo, reduces both systolic and diastolic blood pressure with no effect on heart rate, when intravenously injected in conscious rabbits. Also enhances the bradycardia due to cardiac afferent stimulation (Bezold-Jarisch reflex). This is Natriuretic peptide TNPc from Oxyuranus microlepidotus (Inland taipan).